The chain runs to 191 residues: MNDYTKYTIGVLSLQGAVSEHIAQIETLGAKAIAVKSLSELQQVDALVLPGGESTAMRRLMHSSGLFQALKSFDKPILGTCAGLILLANKLEGGEPPHLAKMNIQVQRNAFGRQVDSFQTDLMIKGFADPFPAVFIRAPYISRIGSEVEVLAEWQGNVVFAKQGNLLACAFHPELTSDTRVVELFLQQLKE.

L-glutamine is bound at residue 52-54 (GES). Cys-81 functions as the Nucleophile in the catalytic mechanism. L-glutamine contacts are provided by residues Arg-108 and 136–137 (IR). Catalysis depends on charge relay system residues His-172 and Glu-174.

The protein belongs to the glutaminase PdxT/SNO family. In terms of assembly, in the presence of PdxS, forms a dodecamer of heterodimers. Only shows activity in the heterodimer.

It carries out the reaction aldehydo-D-ribose 5-phosphate + D-glyceraldehyde 3-phosphate + L-glutamine = pyridoxal 5'-phosphate + L-glutamate + phosphate + 3 H2O + H(+). The catalysed reaction is L-glutamine + H2O = L-glutamate + NH4(+). It functions in the pathway cofactor biosynthesis; pyridoxal 5'-phosphate biosynthesis. In terms of biological role, catalyzes the hydrolysis of glutamine to glutamate and ammonia as part of the biosynthesis of pyridoxal 5'-phosphate. The resulting ammonia molecule is channeled to the active site of PdxS. The chain is Pyridoxal 5'-phosphate synthase subunit PdxT from Actinobacillus pleuropneumoniae serotype 7 (strain AP76).